Here is a 382-residue protein sequence, read N- to C-terminus: 3-hydroxyisobutyryl-CoA hydrolase, mitochondrial (382 aa).

Substrate contacts are provided by Glu117, Gly142, Glu165, and Asp173.

The protein belongs to the enoyl-CoA hydratase/isomerase family.

The protein localises to the mitochondrion. The enzyme catalyses 3-hydroxy-2-methylpropanoyl-CoA + H2O = 3-hydroxy-2-methylpropanoate + CoA + H(+). It functions in the pathway amino-acid degradation; L-valine degradation. Functionally, hydrolyzes 3-hydroxyisobutyryl-CoA (HIBYL-CoA), a saline catabolite. Has high activity toward isobutyryl-CoA. Could be an isobutyryl-CoA dehydrogenase that functions in valine catabolism. Also hydrolyzes 3-hydroxypropanoyl-CoA. The sequence is that of 3-hydroxyisobutyryl-CoA hydrolase, mitochondrial (hibch) from Danio rerio (Zebrafish).